The following is a 563-amino-acid chain: Arginine--tRNA ligase (563 aa).

The short motif at 108-118 (PNVAKEMHVGH) is the 'HIGH' region element.

Belongs to the class-I aminoacyl-tRNA synthetase family. In terms of assembly, monomer.

It localises to the cytoplasm. The enzyme catalyses tRNA(Arg) + L-arginine + ATP = L-arginyl-tRNA(Arg) + AMP + diphosphate. The sequence is that of Arginine--tRNA ligase (argS) from Pasteurella multocida (strain Pm70).